We begin with the raw amino-acid sequence, 567 residues long: MGRGSVTSLAPGFRFHPTDEELVRYYLKRKVCNKPFKFDAISVTDIYKSEPWDLPDKSKLKSRDLEWYFFSMLDKKYSNGSKTNRATEKGYWKTTGKDREIRNGSRVVGMKKTLVYHKGRAPRGERTNWVMHEYRLSDEDLKKAGVPQEAYVLCRIFQKSGTGPKNGEQYGAPYLEEEWEEDGMTYVPAQDAFSEGLALNDDVYVDIDDIDEKPENLVVYDAVPILPNYCHGESSNNVESGNYSDSGNYIQPGNNVVDSGGYFEQPIETFEEDRKPIIREGSIQPCSLFPEEQIGCGVQDENVVNLESSNNNVFVADTCYSDIPIDHNYLPDEPFMDPNNNLPLNDGLYLETNDLSCAQQDDFNFEDYLSFFDDEGLTFDDSLLMGPEDFLPNQEALDQKPAPKELEKEVAGGKEAVEEKESGEGSSSKQDTDFKDFDSAPKYPFLKKTSHMLGAIPTPSSFASQFQTKDAMRLHAAQSSGSVHVTAGMMRISNMTLAADSGMGWSYDKNGNLNVVLSFGVVQQDDAMTASGSKTGITATRAMLVFMCLWVLLLSVSFKIVTMVSAR.

In terms of domain architecture, NAC spans 9-159 (LAPGFRFHPT…AYVLCRIFQK (151 aa)). Residues 108–165 (VGMKKTLVYHKGRAPRGERTNWVMHEYRLSDEDLKKAGVPQEAYVLCRIFQKSGTGPK) mediate DNA binding. The tract at residues 393 to 436 (NQEALDQKPAPKELEKEVAGGKEAVEEKESGEGSSSKQDTDFKD) is disordered. The span at 397-423 (LDQKPAPKELEKEVAGGKEAVEEKESG) shows a compositional bias: basic and acidic residues. The helical transmembrane segment at 544-564 (LVFMCLWVLLLSVSFKIVTMV) threads the bilayer.

In terms of tissue distribution, expressed in root meristem. Expressed in roots, rosette leaves, cauline leaves, shoot apex, stems and flowers.

It is found in the membrane. The protein resides in the nucleus. In terms of biological role, transcriptional activator activated by proteolytic cleavage through regulated intramembrane proteolysis (RIP). Transcripition activator associated with the induction of genes related to flavonoid biosynthesis and required for the accumulation of anthocyanins in response to high light stress. Plays a role in the regulation of 20S and 26S proteasomes in response to high light stress. The polypeptide is NAC domain-containing protein 78 (NAC078) (Arabidopsis thaliana (Mouse-ear cress)).